A 136-amino-acid chain; its full sequence is Large ribosomal subunit protein eL27 (136 aa).

One can recognise a KOW domain in the interval 5–40 (MKPGKVVLVLAGRYSGRKAVIVKNIDDGTSDRPYSH). N6-acetyllysine occurs at positions 27 and 93.

Belongs to the eukaryotic ribosomal protein eL27 family. As to quaternary structure, component of the large ribosomal subunit. Interacts with RRP1B. Component of the large ribosomal subunit. Interacts with RRP1B. Interacts with DHX33.

The protein resides in the cytoplasm. It localises to the cytosol. Its subcellular location is the rough endoplasmic reticulum. Functionally, component of the large ribosomal subunit. Required for proper rRNA processing and maturation of 28S and 5.8S rRNAs. This Canis lupus familiaris (Dog) protein is Large ribosomal subunit protein eL27 (RPL27).